Here is a 187-residue protein sequence, read N- to C-terminus: Peptidyl-tRNA hydrolase (187 aa).

Position 15 (Tyr15) interacts with tRNA. His20 acts as the Proton acceptor in catalysis. Tyr64, Asn66, and Asn112 together coordinate tRNA.

The protein belongs to the PTH family. In terms of assembly, monomer.

The protein localises to the cytoplasm. The enzyme catalyses an N-acyl-L-alpha-aminoacyl-tRNA + H2O = an N-acyl-L-amino acid + a tRNA + H(+). In terms of biological role, hydrolyzes ribosome-free peptidyl-tRNAs (with 1 or more amino acids incorporated), which drop off the ribosome during protein synthesis, or as a result of ribosome stalling. Catalyzes the release of premature peptidyl moieties from peptidyl-tRNA molecules trapped in stalled 50S ribosomal subunits, and thus maintains levels of free tRNAs and 50S ribosomes. The chain is Peptidyl-tRNA hydrolase from Phocaeicola vulgatus (strain ATCC 8482 / DSM 1447 / JCM 5826 / CCUG 4940 / NBRC 14291 / NCTC 11154) (Bacteroides vulgatus).